The chain runs to 292 residues: MEKYSKIEKLGEGTYGIVYKAKNRETGEIVALKRIRLDSEDEGVPCTAIREISLLKELKHPNIVRLHDVIHTERKLTLVFEYLDQDLKKYLDECGGEISKPTIKSFMYQLLKGVAFCHDHRVLHRDLKPQNLLINRKGELKLADFGLARAFGIPVRTYSHEVVTLWYRAPDVLMGSRKYSTPIDIWSAGCIFAEMASGRPLFPGSGTSDQLFRIFKILGTPNEESWPSITELPEYKTDFPVHPAHQLSSIVHGLDEKGLNLLSKMLQYDPNQRITAAAALKHPYFDGLEPIN.

Residues 4-285 (YSKIEKLGEG…AAAALKHPYF (282 aa)) form the Protein kinase domain. ATP contacts are provided by residues 10–18 (LGEGTYGIV) and lysine 33. Threonine 14 is modified (phosphothreonine). Tyrosine 15 carries the post-translational modification Phosphotyrosine. Aspartate 126 acts as the Proton acceptor in catalysis.

It belongs to the protein kinase superfamily. CMGC Ser/Thr protein kinase family. CDC2/CDKX subfamily.

It catalyses the reaction L-seryl-[protein] + ATP = O-phospho-L-seryl-[protein] + ADP + H(+). The enzyme catalyses L-threonyl-[protein] + ATP = O-phospho-L-threonyl-[protein] + ADP + H(+). Its activity is regulated as follows. Phosphorylation at Thr-14 or Tyr-15 inactivates the enzyme. This Dictyostelium discoideum (Social amoeba) protein is Cyclin-dependent kinase 5 homolog (cdk5).